We begin with the raw amino-acid sequence, 827 residues long: Stage II sporulation protein E (827 aa).

10 helical membrane passes run 49–69 (IGFL…ALPF), 71–91 (GAML…VLAG), 116–136 (VAAF…FFSM), 142–162 (GFVY…AIVE), 175–195 (QSLP…EEII), 206–226 (TGLA…ARYV), 247–267 (GLIL…LAFS), 269–289 (LLGG…LIVG), 299–319 (GSAG…LFLL), and 320–340 (TPQS…EHLQ). The Cytoplasmic portion of the chain corresponds to 341–827 (EQQQYARKIR…AIFQNKQEIS (487 aa)). Residues 594–804 (STGAAHAAKG…DDMTVVVVRI (211 aa)) enclose the PPM-type phosphatase domain.

The cofactor is Mn(2+).

It is found in the cell membrane. It catalyses the reaction O-phospho-L-seryl-[protein] + H2O = L-seryl-[protein] + phosphate. The catalysed reaction is O-phospho-L-threonyl-[protein] + H2O = L-threonyl-[protein] + phosphate. Functionally, normally needed for pro-sigma E processing during sporulation but can be bypassed in vegetative cells. Activates SpoIIAA by dephosphorylation. The chain is Stage II sporulation protein E (spoIIE) from Bacillus subtilis (strain 168).